A 1709-amino-acid polypeptide reads, in one-letter code: MKVEPLWSLDVGTQPVYSLVRTPDGTKMYAATGKTVVTFGPGPEITRQTSTQHPLVTCLAISPDGHMVVSMGTDGAVMFNDSTGAALFKYSHQNEVQAAAFSPDGSLFVSAAIGDVGIYHCRDVKTKVMKQSFKGTPRAIAWAPGSDWFVISTQDGDLVIMTPEGMELNSCNLGAPAWALKVVQCSSFLVQPNTALDVDIANSSDDEFTIPQTVTPSASASGRSGSGKRHKVELDREEFITSHNMDNFRILVASWDMRYRVINPSVYADGACIAKMTDGGSDSRSRSSSRRRLDGLLVAVSEIPFIPLCMEIIGNYVFLSGVGGSVVVLNSSNGRVLSSLYQVWESDPFISKAPLIPTESQSKHLPQKRTIMGQVTTCTDVNQRLMELRKREAMANRNVKNVTNPLAFHGMHTIWCYSMIHVEPSSLILGLSNGVLLCLSLRYAMIHSQYGSLYAYRRGLMSVSVMNLSTGRESILEVGMHVENLSIYESTLAIKTSSRLLLYRLQDPALKKRNIESVMDYYSSSTNGLIETDRSRRQNMSSLSYSFETSIKKRFVCSQLIVSNNHFFLCNVSHISVHDFSGKQTDRWTFKQLKCTYVRSIGGIPSNEAVLVGFDTGKVCIFKIGNKFPIELLLHRSPIVSLDISPDRKYISVVDRSDVVSVYKFLDDSEIVLGATNMAVVEHENTPTSYSRIAALAHVSLDGNLPGITTGQDYSVPLYTFKGTTSAIWDLVLPGVLARSTQKSVDICIDSGVSYTFQLSYPGSFVLCQNGNRAFIFNVSYLGQSLVNLDYSSLIEMVEVPMMPMVIYRTHKVLRMLLDSNYEAGAVFPSQAANYELNEAIKAANLGVPMDCWRDLAIAALLSNELDLAREVLATIGDIRSLKAIAEITRQTSTKTYLLLSALALSMCDHFSEASLLFAASDDIQMATELLFFINRECIPYNSPNSSLISSIAKKLICRELHSSLTGTEEKILEVLKTQGDSTYSPLGTQTAPEAKETNTALLTDFSDKLLAKGRATVNKFLSAIESGSSKADGPGNDNKDTYNYFNDYRILLRRQISSFAKTESERANLVVRHSKFLETSLEWRAAAASYLDMDDPESAIDVLITSKQTGALLRLVRIFPPVARELNHKAPSFNDFESPEDADEYAPSSVQNQMLKRAYRKALVYFEKSNDYSNAIFIAQRLGDPLVLLRLLIQQGSWSQVEALGKAYPEMMPSIHEAKASMLLREGRFIEALERLRLSGNTSKEAIIIKQLIDASIAECKFNLTRALTGQLAKQIAKTRAFAALSVSSMEYYAAIKAIRARVLVYTGYQQVMEYMVNILRSRDLSDITMIRLHDNTQSAKVVTAGIFLTSYAAMANELTNADSVFSEELENNTGILSGEDTVKASSQRSKKDNPPSLRSTIGFITSSTTPQLGSLAHIDLGINNMNIPPGISELIIWVCLALASRRTYPEVEARALKRILASRIPGPMIGYFRRQMLLVKGTPAKDFSHGESSDAESRDACPRCAAPLKALPPSRPVGAQDMAILSSLPHCCPVFSDICKNCGSPIVRSALSLKILPLVLAEPDDETSIAVALERAAAVEMDIEALMGETNRLEIGTDDLQTDEGVVDVLRRASIAGDGRGAVLTSEQFEKISPANIFIVDDTWSNPSLLPRFVVGNVIKRFFIRTISDFQLHYCTGCGFFFDGIEYEEYVIVTGSCPICGATNIVL.

2 WD repeats span residues 51–89 (TQHP…ALFK) and 132–171 (SFKG…LNSC). Positions 209-229 (TIPQTVTPSASASGRSGSGKR) are disordered. The WD 3 repeat unit spans residues 634-673 (LHRSPIVSLDISPDRKYISVVDRSDVVSVYKFLDDSEIVL). An LRR 1 repeat occupies 1231–1256 (IEALERLRLSGNTSKEAIIIKQLIDA). Residues 1378–1404 (LSGEDTVKASSQRSKKDNPPSLRSTIG) are disordered. The stretch at 1414–1436 (LGSLAHIDLGINNMNIPPGISEL) is one LRR 2 repeat.

It is found in the cell projection. Its subcellular location is the cilium. It localises to the flagellum. The protein localises to the cytoplasm. The protein resides in the cytoskeleton. It is found in the flagellum axoneme. Its subcellular location is the flagellum basal body. Its function is as follows. Component of the intraflagellar transport complex A (IFT-A) involved in flagellar assembly. This chain is Intraflagellar transport protein 122, found in Giardia intestinalis (strain ATCC 50803 / WB clone C6) (Giardia lamblia).